A 726-amino-acid polypeptide reads, in one-letter code: AP-1 complex subunit beta-1 (726 aa).

The protein belongs to the adaptor complexes large subunit family. As to quaternary structure, adaptor protein complex 1 (AP-1) is a heterotetramer composed of two large adaptins (gamma-type subunit APL4 and beta-type subunit APL2), a medium adaptin (mu-type subunit APM1) and a small adaptin (sigma-type subunit APS1). Interacts with CHC1. Interacts with APM2, probably forming an alternative AP-1-like complex.

The protein resides in the cell membrane. The protein localises to the membrane. It localises to the coated pit. In terms of biological role, adaptins are components of the adaptor complexes which link clathrin to receptors in coated vesicles. Clathrin-associated protein complexes are believed to interact with the cytoplasmic tails of membrane proteins, leading to their selection and concentration. The AP-1 complex interacts directly with clathrin. The polypeptide is AP-1 complex subunit beta-1 (APL2) (Saccharomyces cerevisiae (strain ATCC 204508 / S288c) (Baker's yeast)).